The following is a 178-amino-acid chain: Cytidylate kinase 2 (178 aa).

7-15 contacts ATP; the sequence is GKSGCGNTT.

This sequence belongs to the cytidylate kinase family. Type 2 subfamily.

The protein localises to the cytoplasm. The enzyme catalyses CMP + ATP = CDP + ADP. The catalysed reaction is dCMP + ATP = dCDP + ADP. In Borreliella afzelii (strain PKo) (Borrelia afzelii), this protein is Cytidylate kinase 2.